A 2530-amino-acid chain; its full sequence is Cullin-9 (2530 aa).

Lys-87 participates in a covalent cross-link: Glycyl lysine isopeptide (Lys-Gly) (interchain with G-Cter in ubiquitin). The CPH domain maps to 367 to 440; it reads RSEFSSRSGY…HWHMLEILGP (74 aa). Disordered stretches follow at residues 585–639 and 930–951; these read LPSS…KAQS and RGSPERAVLETPSTQGQDGSPE. Residues 940–949 are compositionally biased toward polar residues; the sequence is TPSTQGQDGS. Ser-978 bears the Phosphoserine mark. Positions 1145–1324 constitute a DOC domain; the sequence is PITIPFFDVF…RTCLFYTIRA (180 aa). Residue 1365–1372 coordinates ATP; the sequence is AAQALGKT. Disordered regions lie at residues 1435-1468 and 1667-1690; these read EAPPGPSPEPSSQPLSKNSKGQDGSPTPAPTPVC and GDQEEWRPEKVEEDDEGQETGREL. A Phosphoserine modification is found at Ser-1459. Lys-1884 participates in a covalent cross-link: Glycyl lysine isopeptide (Lys-Gly) (interchain with G-Cter in NEDD8). The interval 2070–2287 is TRIAD supradomain; sequence RPDQCPVCVT…KDYYNCSAMV (218 aa). Zn(2+) contacts are provided by Cys-2074, Cys-2077, Cys-2092, His-2094, Cys-2097, Cys-2100, Cys-2119, Cys-2124, Cys-2164, Cys-2170, Cys-2185, Cys-2188, Cys-2193, Cys-2196, His-2202, Cys-2207, Cys-2240, and Cys-2243. Residues 2074 to 2124 form an RING-type 1 zinc finger; that stretch reads CPVCVTPLGPHDDSPSLCCLHCCCKSCWNEYLTTRIEQNFVLNCTCPIADC. The IBR-type zinc finger occupies 2144-2207; the sequence is SKYEKALLRG…FPEAHYPASC (64 aa). An RING-type 2; atypical zinc finger spans residues 2240-2269; that stretch reads CPSCQAPIEKNEGCLHMTCARCNHGFCWRC. Cys-2253 is an active-site residue. Cys-2258, Cys-2261, Cys-2266, Cys-2269, His-2277, and Cys-2283 together coordinate Zn(2+). Ser-2440 bears the Phosphoserine mark. A disordered region spans residues 2443–2530; it reads VETREVKGSN…DEDEDDESYD (88 aa). Polar residues predominate over residues 2452–2462; it reads NVPSDQPQGSS. A coiled-coil region spans residues 2459-2500; sequence QGSSGLEVEDEEEEEEEEEEEEEEEEEDVPEWQHEFDEELDN. Acidic residues-rich tracts occupy residues 2465–2510 and 2520–2530; these read EVED…EESE and GDEDEDDESYD.

This sequence belongs to the cullin family. In terms of assembly, component of a Cul9-RING complex consisting of CUL9 and RBX1; the CUL9-RBX1 complex is a heterododecamer composed of six CUL9 and six RBX1 protomers. Interacts (via C-terminal TRIAD/RBR supradomain) with E2 ubiquitin-conjugating enzyme UBE2L3. Interacts with CUL7; the interaction with the CUL7 component of the 3M complex leads to inhibition of CUL9 activity. The CUL7-CUL9 heterodimer seems to interact specifically with TP53, likely via the CPH domain. Forms a complex with p53/TP53 in the cytoplasm of unstressed cells. Interacts with UBCH7 and UBCH8. Post-translationally, autoubiquitinated by the CUL9-RBX1 complex at Lys-87. Neddylated. Neddylation is mediated by E1 enzyme UBA3-NAE1 complex and E2 enzyme UBE2F. Structural rearrangment of the C-terminal TRIAD/RBR supradomain may play a role in neddylation and deneddylation.

It localises to the cytoplasm. Core component of the Cul9-RING ubiquitin-protein ligase complex composed of CUL9 and RBX1. The CUL9-RBX1 complex mediates ubiquitination and subsequent degradation of BIRC5 and is required to maintain microtubule dynamics and genome integrity. Acts downstream of the 3M complex, which inhibits CUL9 activity and the ubiquitination of BIRC5. The CUL9-RBX1 complex also mediates mono-ubiquitination of p53/TP53. Acts as a cytoplasmic anchor protein in p53/TP53-associated protein complex. Regulates the subcellular localization of p53/TP53 and its subsequent function. Ubiquitinates apurinic/apyrimidinic endodeoxyribonuclease APEX2. Ubiquitination by the CUL9-RBX1 complex is predominantly mediated by E2 ubiquitin-conjugating enzymes UBE2L3 and UBE2D2. The protein is Cullin-9 (Cul9) of Mus musculus (Mouse).